The following is a 481-amino-acid chain: Protein NRT1/ PTR FAMILY 1.3 (481 aa).

The next 12 membrane-spanning stretches (helical) occupy residues 32–52, 57–77, 88–108, 124–144, 173–193, 202–222, 259–279, 302–322, 333–353, 374–394, 422–442, and 451–471; these read LAYF…YGMG, ANIL…GAFI, IGFG…TTII, LLKS…AGGV, FNWY…LLVF, IGFG…FAAS, IWST…FIVL, IFLV…IVPL, LGVM…ISAL, AMWL…NTIA, ASLI…GSWI, and LDYY…YFVW.

It belongs to the major facilitator superfamily. Proton-dependent oligopeptide transporter (POT/PTR) (TC 2.A.17) family. Expressed in roots.

It localises to the membrane. The sequence is that of Protein NRT1/ PTR FAMILY 1.3 (NPF1.3) from Arabidopsis thaliana (Mouse-ear cress).